We begin with the raw amino-acid sequence, 271 residues long: Elongation factor Ts (271 aa).

The interval 76 to 79 is involved in Mg(2+) ion dislocation from EF-Tu; the sequence is TDFV.

It belongs to the EF-Ts family.

Its subcellular location is the cytoplasm. Its function is as follows. Associates with the EF-Tu.GDP complex and induces the exchange of GDP to GTP. It remains bound to the aminoacyl-tRNA.EF-Tu.GTP complex up to the GTP hydrolysis stage on the ribosome. This Mycolicibacterium vanbaalenii (strain DSM 7251 / JCM 13017 / BCRC 16820 / KCTC 9966 / NRRL B-24157 / PYR-1) (Mycobacterium vanbaalenii) protein is Elongation factor Ts.